Reading from the N-terminus, the 322-residue chain is MEKQYRVLLYYKYVPIEDPEAFREQHLAFCKELGLLGRILVSSEGINGTVSGTVEQTEKYMETMKADPRFADMVFKIDEAEGHAFKKIFVRHKKELVTLRLEDDVDPNETTGQHLKPAEFYEKMQDPNTIVIDARNDYEYDLGHFRGAVRPDIEAFRELPEWIEEHKDMLEGKKILTYCTGGVRCEKFSGWLVKQGFEDVAQLDGGIVTYGKDPEVQGKLWDGQCYVFDERISVPVNRVEHVIVGKDYFTGEPCERYVNCANPSCNKKMICTPENEYKYMRSCSHECRTNPRNLYVKEHNMTEEEVNARLAAIETEDHAAAE.

Residues 125–219 (QDPNTIVIDA…YGKDPEVQGK (95 aa)) enclose the Rhodanese domain. Cys-179 (cysteine persulfide intermediate) is an active-site residue.

The protein belongs to the TrhO family.

It catalyses the reaction uridine(34) in tRNA + AH2 + O2 = 5-hydroxyuridine(34) in tRNA + A + H2O. Catalyzes oxygen-dependent 5-hydroxyuridine (ho5U) modification at position 34 in tRNAs. The polypeptide is tRNA uridine(34) hydroxylase (Bacillus subtilis (strain 168)).